A 317-amino-acid polypeptide reads, in one-letter code: Transaldolase (317 aa).

Catalysis depends on lysine 132, which acts as the Schiff-base intermediate with substrate.

This sequence belongs to the transaldolase family. Type 1 subfamily. In terms of assembly, homodimer.

It localises to the cytoplasm. It catalyses the reaction D-sedoheptulose 7-phosphate + D-glyceraldehyde 3-phosphate = D-erythrose 4-phosphate + beta-D-fructose 6-phosphate. It functions in the pathway carbohydrate degradation; pentose phosphate pathway; D-glyceraldehyde 3-phosphate and beta-D-fructose 6-phosphate from D-ribose 5-phosphate and D-xylulose 5-phosphate (non-oxidative stage): step 2/3. Its function is as follows. Transaldolase is important for the balance of metabolites in the pentose-phosphate pathway. This is Transaldolase from Histophilus somni (strain 129Pt) (Haemophilus somnus).